The primary structure comprises 682 residues: K(+)-insensitive pyrophosphate-energized proton pump 2 (682 aa).

The next 5 helical transmembrane spans lie at 1–21, 56–76, 78–98, 130–150, and 160–180; these read MELFPIIPAGGILALLVALYM, TIAGLALIVAVLLALLTRQYH, AVAFITGAFASALSGYIGMYV, LAVTALSLLGVTSLFYAFGGA, and IVGFGFGASFVALFAQLSGGI. Lysine 183 serves as a coordination point for substrate. Residues aspartate 186, aspartate 190, and aspartate 216 each coordinate Mg(2+). The next 7 membrane-spanning stretches (helical) occupy residues 237 to 257, 258 to 278, 291 to 311, 318 to 338, 353 to 373, 375 to 395, and 404 to 424; these read IGAMILGIALVPFFGVKGIVF, PLVARAAGIIASIIGMFFVRA, GYIVTSILAIIFLYPISRYML, FIYFYGAGIIGIVLSFIFVLI, IARASITGPATNIISGVAVGF, STALPVVFISLAILGAYWLGL, and LYGTAVATMGMLSTAAYILAM. Residue aspartate 432 participates in Mg(2+) binding. A run of 4 helical transmembrane segments spans residues 468-488, 506-526, 574-594, and 595-615; these read YAIGSAALATFLLFSAYIDEV, EVFVGAFIAAMMVLLFSSTAI, MVLPGLIVVITPIIVGLVLKA, and EAAAAFLMVGTITGVIVALFL. Ca(2+) contacts are provided by aspartate 623, aspartate 649, and aspartate 653. Lysine 656 is a binding site for substrate. Residues 662 to 682 form a helical membrane-spanning segment; the sequence is SLHVLVKLISTITLVLAGLFI.

This sequence belongs to the H(+)-translocating pyrophosphatase (TC 3.A.10) family. K(+)-insensitive subfamily. Homodimer. Mg(2+) serves as cofactor.

It localises to the cell membrane. It carries out the reaction diphosphate + H2O + H(+)(in) = 2 phosphate + 2 H(+)(out). Functionally, proton pump that utilizes the energy of pyrophosphate hydrolysis as the driving force for proton movement across the membrane. Generates a proton motive force. In Moorella thermoacetica (strain ATCC 39073 / JCM 9320), this protein is K(+)-insensitive pyrophosphate-energized proton pump 2.